Reading from the N-terminus, the 615-residue chain is MGKIIGIDLGTTNSCVAVLEGGEAQIIANSEGMRTTPSVVAFTKDGERIVGEPAKRQAVTNADKTITSIKTHMGTDYKVNIDGKSYTPQEISAIILQKLKSDAESYLGQTVTEAVITVPAYFTDAQRQATKDAGRIAGLDVKRIINEPTAAALAYGMDKLDQEKKILVFDLGGGTFDVSILEIGDGTFEVLATAGNNRLGGDDFDQIVIDYLAEEFKKAEGVDLRNDKMALQRLKEAAEKAKKELSSTMSSNINLPFITATAEGPKHLNIDLSRAKFEELTRGLVEKTMEPTKTALQDAGLSTGDIDDVLLVGGSTRIPAVQEAVKKFIGKEPHKGINPDECVAAGASIQAGVLAGDVKDLLLLDVTPLSLGIETMGNVMTKIIERNTTIPTKKSQIFSTAADNQTAVDIHVLQGERSMAYDNTTLGRFQLTDIPPAQRGIPQIEVTFDIDANGIVNVSAKDLGTGKEQKITITSNTNLSEAEIEQKIKEAEMNAEADKQKKEKIEAFNQAESTIYQTEKTLNELGDKISSGEKEDIEKAIADLKAVKDNQDATAEELKKATDEVMTKFQKVSQEMYQKAAQEQQAAQGAEQAQDNGPKDDNVVDADFKEVDEDK.

Thr-175 is modified (phosphothreonine; by autocatalysis). Residues 573–615 form a disordered region; it reads SQEMYQKAAQEQQAAQGAEQAQDNGPKDDNVVDADFKEVDEDK. The span at 580 to 594 shows a compositional bias: low complexity; the sequence is AAQEQQAAQGAEQAQ. Basic and acidic residues predominate over residues 597-609; the sequence is GPKDDNVVDADFK.

Belongs to the heat shock protein 70 family.

Functionally, acts as a chaperone. In Clostridioides difficile (strain 630) (Peptoclostridium difficile), this protein is Chaperone protein DnaK.